A 552-amino-acid chain; its full sequence is Probable protein kinase UbiB (552 aa).

The chain crosses the membrane as a helical span at residues 22–42 (LLPANLPLAATLLLLPFKLFP). A Protein kinase domain is found at 118–498 (SFNIEPLASA…QQLARQRNRR (381 aa)). Residues 124–132 (LASASVAQV) and K146 contribute to the ATP site. D281 (proton acceptor) is an active-site residue. Transmembrane regions (helical) follow at residues 501-521 (ITLL…GEGI) and 530-550 (FGDI…AWLL).

Belongs to the ABC1 family. UbiB subfamily.

It is found in the cell inner membrane. It functions in the pathway cofactor biosynthesis; ubiquinone biosynthesis [regulation]. Functionally, is probably a protein kinase regulator of UbiI activity which is involved in aerobic coenzyme Q (ubiquinone) biosynthesis. This Cellvibrio japonicus (strain Ueda107) (Pseudomonas fluorescens subsp. cellulosa) protein is Probable protein kinase UbiB.